A 117-amino-acid polypeptide reads, in one-letter code: Chondroitin proteoglycan 7 (117 aa).

The first 19 residues, 1–19 (MQTITLLALLACIAVPIFA), serve as a signal peptide directing secretion. A disordered region spans residues 31–97 (VEASGEGSGE…SGENLSNGIV (67 aa)). Low complexity-rich tracts occupy residues 32–41 (EASGEGSGES) and 48–57 (ESSGEGSGES). O-linked (Xyl...) (chondroitin sulfate) serine glycans are attached at residues Ser66, Ser70, Ser74, Ser84, and Ser88. Residues 75–95 (GASDAVLESSGEGSGENLSNG) show a composition bias toward low complexity. Asn91 carries an N-linked (GlcNAc...) asparagine glycan.

In Caenorhabditis briggsae, this protein is Chondroitin proteoglycan 7 (cpg-7).